A 61-amino-acid chain; its full sequence is Bacteriocin leucocin-B (61 aa).

Residues methionine 1–glycine 24 constitute a propeptide that is removed on maturation. Cysteines 33 and 38 form a disulfide.

Belongs to the bacteriocin class IIA/YGNGV family.

It localises to the secreted. Its function is as follows. Active against L.monocytogenes and several lactic acid bacteria. The protein is Bacteriocin leucocin-B of Leuconostoc carnosum.